Consider the following 262-residue polypeptide: uncharacterized protein (262 aa).

Positions 1-22 (MMNNSITLLLALLVGLVGFAFT) are cleaved as a signal peptide.

This sequence belongs to the IIV-6 117L family.

This is an uncharacterized protein from Aedes vexans (Inland floodwater mosquito).